Here is a 729-residue protein sequence, read N- to C-terminus: Anti-bacteriophage protein B (729 aa).

The Helicase ATP-binding domain maps to 109–271 (FDLLKSGQNV…KLGYPHTFVS (163 aa)). Position 122–129 (122–129 (APTSMGKS)) interacts with ATP. The Helicase C-terminal domain occupies 297–472 (ALGEIAHACV…GIDTPINLLA (176 aa)).

The protein belongs to the helicase family. In terms of assembly, interacts with AbpB.

Part of an antiviral system composed of AbpA and AbpB; when both are expressed from a plasmid they confer resistance to phages T2, T4, T7 and lambda but not RB32 or RB69. Resistance is temperature dependent, it can be seen at 30 degrees Celsius but not at 37 or 42 degrees Celsius. The system impairs phage but not bacterial DNA synthesis (shown for T4, T7 and lambda). Partially suppressed by mutations in T4 gene 41, a replicative helicase. Its function is as follows. Deletion or mutations in this gene were selected in directed evolution experiments for resistance to intense ionizing radiation (3000 Gy). The polypeptide is Anti-bacteriophage protein B (Escherichia coli (strain K12)).